We begin with the raw amino-acid sequence, 218 residues long: DNA replication complex GINS protein psf3 (218 aa).

A compositionally biased stretch (gly residues) spans 147-163 (GGGSSYHGRDGGGAGGK). Residues 147–182 (GGGSSYHGRDGGGAGGKGKGKATKDDNASNLGVGGA) are disordered.

The protein belongs to the GINS3/PSF3 family. In terms of assembly, component of the GINS complex which is a heterotetramer of div-26/sld5, drc-1/psf1, drc-2/psf2 and drc-3/psf3.

It localises to the nucleus. Functionally, the GINS complex plays an essential role in the initiation of DNA replication. This Neurospora crassa (strain ATCC 24698 / 74-OR23-1A / CBS 708.71 / DSM 1257 / FGSC 987) protein is DNA replication complex GINS protein psf3 (drc-3).